Here is a 131-residue protein sequence, read N- to C-terminus: MSWQAYVDDHLMCEIEGNHLTSAAIIGQDGSVWAKSENFPQLKPEEITGILNDFNEPGTLAPTGLYIGGSKYMVIQGEPGAVIRGKKGPGGVTVKKTALALVIGIYDEPMTPGQCNMIVERLGDYLIEQGL.

This sequence belongs to the profilin family. Occurs in many kinds of cells as a complex with monomeric actin in a 1:1 ratio.

The protein resides in the cytoplasm. Its subcellular location is the cytoskeleton. Functionally, binds to actin and affects the structure of the cytoskeleton. At high concentrations, profilin prevents the polymerization of actin, whereas it enhances it at low concentrations. Has a high affinity for poly-proline. The polypeptide is Profilin (Citrullus lanatus (Watermelon)).